Consider the following 231-residue polypeptide: Large ribosomal subunit protein uL1 (231 aa).

It belongs to the universal ribosomal protein uL1 family. As to quaternary structure, part of the 50S ribosomal subunit.

In terms of biological role, binds directly to 23S rRNA. The L1 stalk is quite mobile in the ribosome, and is involved in E site tRNA release. Functionally, protein L1 is also a translational repressor protein, it controls the translation of the L11 operon by binding to its mRNA. The sequence is that of Large ribosomal subunit protein uL1 from Buchnera aphidicola subsp. Acyrthosiphon pisum (strain APS) (Acyrthosiphon pisum symbiotic bacterium).